The following is a 207-amino-acid chain: Inhibitor of hydrogen peroxide resistance (207 aa).

The segment at residues 163–182 (MNYIHQRTRVSRSVVAEVLA) is a DNA-binding region (H-T-H motif).

It belongs to the IprA family.

Its function is as follows. Involved in oxidative stress resistance. This chain is Inhibitor of hydrogen peroxide resistance, found in Salmonella typhimurium (strain LT2 / SGSC1412 / ATCC 700720).